Here is a 77-residue protein sequence, read N- to C-terminus: Conotoxin CaHr91 (77 aa).

Residues 1–19 (MKLTCALIITVLFLSITAD) form the signal peptide. Positions 20–43 (DSRGKQGYRALKSIAGMLNSKTVR) are excised as a propeptide. Disulfide bonds link Cys-45/Cys-60, Cys-52/Cys-65, and Cys-59/Cys-74.

Belongs to the conotoxin O1 superfamily. Expressed by the venom duct.

The protein localises to the secreted. The chain is Conotoxin CaHr91 from Conus capitaneus (Captain cone).